The following is a 159-amino-acid chain: Transcription elongation factor A protein-like 1 (159 aa).

Residues Met-1 to Arg-120 are disordered. The segment covering Lys-17–Pro-34 has biased composition (basic and acidic residues). Acidic residues predominate over residues Gln-37–Leu-54. Composition is skewed to basic and acidic residues over residues Ser-64–Glu-80 and His-95–Gly-119.

It belongs to the TFS-II family. TFA subfamily.

It localises to the nucleus. In terms of biological role, may be involved in transcriptional regulation. Modulates various viral and cellular promoters in a promoter context-dependent manner. Does not bind DNA directly. The polypeptide is Transcription elongation factor A protein-like 1 (Bos taurus (Bovine)).